Here is a 517-residue protein sequence, read N- to C-terminus: MNKLAVLYAEHIATLQKRTREIIERENLDGVVFHSGQAKRQFLDDMYYPFKVNPQFKAWLPVIDNPHCWIVANGTDKPKLIFYRPVDFWHKVPDEPNEYWADYFDIELLVKPDQVEKLLPYDKARFAYIGEYLEVAQALGFELMNPEPVMNFYHYHRAYKTQYELACMREANKIAVQGHKAARDAFFQGKSEFEIQQAYLLATQHSENDNAYGNIVALNENCAILHYTHFDRVAPATHRSFLIDAGANFNGYAADITRTYDFTGEGEFAELVATMKQHQIALCNQLAPGKLYGELHLDCHQRVAQTLSDFNIVDLSADEIVAKGITSTFFPHGLGHHIGLQVHDVGGFMADEQGAHQEPPEGHPFLRCTRKIEANQVFTIEPGLYFIDSLLGDLAATDNNQHINWDKVAELKPFGGIRIEDNIIVHEDSLENMTRELRARLTTHSLRGLSAPQFSINDPAVMSEYSYPSEPLSYEEEIKKSTFIVHVRTRRILVRRRTLSPILIAVTPMPAITAGLM.

Asp244, Asp255, His336, Glu381, and Glu420 together coordinate Mn(2+).

It belongs to the peptidase M24B family. Bacterial-type prolidase subfamily. Monomer. Mn(2+) serves as cofactor.

The enzyme catalyses Xaa-L-Pro dipeptide + H2O = an L-alpha-amino acid + L-proline. It carries out the reaction diisopropyl fluorophosphate + H2O = diisopropyl phosphate + fluoride + 2 H(+). The catalysed reaction is An aryl dialkyl phosphate + H2O = dialkyl phosphate + an aryl alcohol.. Splits dipeptides with a prolyl or hydroxyprolyl residue in the C-terminal position and a nonpolar amino acid at the N-terminal position. Also catalyzes the hydrolysis of toxic organophosphorus cholinesterase-inhibiting compounds including insecticide paraoxon and nerve gases such as diisopropylfluorophosphate (DFP), O-isopropyl methylphosphonofluoridate (sarin), O-pinacolyl methylphosphonofluoridate (soman), and O-cyclohexyl methylphosphonofluoridate. In Alteromonas sp, this protein is Xaa-Pro dipeptidase (pepQ).